Here is a 178-residue protein sequence, read N- to C-terminus: Large ribosomal subunit protein uL6 (178 aa).

Belongs to the universal ribosomal protein uL6 family. As to quaternary structure, part of the 50S ribosomal subunit.

Its function is as follows. This protein binds to the 23S rRNA, and is important in its secondary structure. It is located near the subunit interface in the base of the L7/L12 stalk, and near the tRNA binding site of the peptidyltransferase center. In Natranaerobius thermophilus (strain ATCC BAA-1301 / DSM 18059 / JW/NM-WN-LF), this protein is Large ribosomal subunit protein uL6.